The sequence spans 40 residues: Trypsin inhibitor (40 aa).

As to quaternary structure, monomer.

The catalysed reaction is Preferential cleavage: Arg-|-Xaa, Lys-|-Xaa.. Its function is as follows. Inhibits trypsin but not chymotrypsin, papain or porcine pancreatic alpha-amylase. Has insecticidal activity against A.aegypti. Functions by inhibiting the A.aegypti midgut proteases to reduce the survival of larva and adults. This is Trypsin inhibitor from Cassia leiandra (Marimari).